The chain runs to 473 residues: Cell division protein FtsP (473 aa).

Residues 1 to 27 (MSFSRRQFLQASGLAVCLGSLSSSVRA) constitute a signal peptide (tat-type signal).

The protein belongs to the FtsP family. Post-translationally, predicted to be exported by the Tat system. The position of the signal peptide cleavage has not been experimentally proven.

The protein localises to the periplasm. Cell division protein that is required for growth during stress conditions. May be involved in protecting or stabilizing the divisomal assembly under conditions of stress. This is Cell division protein FtsP from Proteus mirabilis (strain HI4320).